The following is a 47-amino-acid chain: Protein PsbN (47 aa).

The chain crosses the membrane as a helical span at residues 9 to 31 (YSLLIAMVTITFGLTGYGLYTAF).

Belongs to the PsbN family.

The protein resides in the cellular thylakoid membrane. Its function is as follows. May play a role in photosystem I and II biogenesis. This chain is Protein PsbN, found in Prochlorococcus marinus (strain MIT 9303).